The chain runs to 210 residues: Proteasome subunit beta (210 aa).

Residues 1-9 (MIHDKVFKG) constitute a propeptide, removed in mature form; by autocatalysis. The active-site Nucleophile is the threonine 10.

Belongs to the peptidase T1B family. The 20S proteasome core is composed of 14 alpha and 14 beta subunits that assemble into four stacked heptameric rings, resulting in a barrel-shaped structure. The two inner rings, each composed of seven catalytic beta subunits, are sandwiched by two outer rings, each composed of seven alpha subunits. The catalytic chamber with the active sites is on the inside of the barrel. Has a gated structure, the ends of the cylinder being occluded by the N-termini of the alpha-subunits. Is capped at one or both ends by the proteasome regulatory ATPase, PAN.

Its subcellular location is the cytoplasm. It carries out the reaction Cleavage of peptide bonds with very broad specificity.. Its activity is regulated as follows. The formation of the proteasomal ATPase PAN-20S proteasome complex, via the docking of the C-termini of PAN into the intersubunit pockets in the alpha-rings, triggers opening of the gate for substrate entry. Interconversion between the open-gate and close-gate conformations leads to a dynamic regulation of the 20S proteasome proteolysis activity. Functionally, component of the proteasome core, a large protease complex with broad specificity involved in protein degradation. The sequence is that of Proteasome subunit beta from Ferroglobus placidus (strain DSM 10642 / AEDII12DO).